A 112-amino-acid polypeptide reads, in one-letter code: MTKLADMKCEACQADAPKVTDSELAELIRLIPDWGVEVRDGIMQLERVYKFKNFKLAMEFTNKLAELAEEEFHHPGILTEWGKVTVTWWSHSVKGLHRNDFIMASKTDQLLG.

Belongs to the pterin-4-alpha-carbinolamine dehydratase family.

The catalysed reaction is (4aS,6R)-4a-hydroxy-L-erythro-5,6,7,8-tetrahydrobiopterin = (6R)-L-erythro-6,7-dihydrobiopterin + H2O. The sequence is that of Putative pterin-4-alpha-carbinolamine dehydratase from Shewanella woodyi (strain ATCC 51908 / MS32).